We begin with the raw amino-acid sequence, 1042 residues long: Sarcoplasmic/endoplasmic reticulum calcium ATPase 2 (1042 aa).

The Cytoplasmic segment spans residues 1-48 (MENAHTKTVEEVLGHFGVNESTGLSLEQVKKLKERWGSNELPAEEGKT). Ser-38 bears the Phosphoserine mark. Residues 49-69 (LLELVIEQFEDLLVRILLLAA) form a helical membrane-spanning segment. At 70–89 (CISFVLAWFEEGEETITAFV) the chain is on the lumenal side. A helical transmembrane segment spans residues 90–110 (EPFVILLILVANAIVGVWQER). Over 111–253 (NAENAIEALK…QERTPLQQKL (143 aa)) the chain is Cytoplasmic. A helical transmembrane segment spans residues 254-273 (DEFGEQLSKVISLICIAVWI). Residues 274-295 (INIGHFNDPVHGGSWIRGAIYY) are Lumenal-facing. A 3'-nitrotyrosine mark is found at Tyr-294 and Tyr-295. The chain crosses the membrane as a helical span at residues 296–313 (FKIAVALAVAAIPEGLPA). Residues Val-304, Ala-305, Ile-307, and Glu-309 each contribute to the Ca(2+) site. At 314-756 (VITTCLALGT…EEGRAIYNNM (443 aa)) the chain is on the cytoplasmic side. The 4-aspartylphosphate intermediate role is filled by Asp-351. Mg(2+) contacts are provided by Asp-351 and Thr-353. Thr-353 provides a ligand contact to ATP. At Thr-441 the chain carries Phosphothreonine. 3 residues coordinate ATP: Glu-442, Arg-489, and Lys-514. Ser-531 is modified (phosphoserine). Arg-559 serves as a coordination point for ATP. Residues 575–594 (MNLEDSANFIKYETNLTFVG) are interaction with HAX1. A Phosphoserine modification is found at Ser-580. Thr-624, Gly-625, and Asp-626 together coordinate ATP. Ser-663 bears the Phosphoserine mark. ATP contacts are provided by Arg-677 and Lys-683. Residue Asp-702 participates in Mg(2+) binding. ATP is bound at residue Asn-705. A helical transmembrane segment spans residues 757 to 776 (KQFIRYLISSNVGEVVCIFL). Asn-767 and Glu-770 together coordinate Ca(2+). Topologically, residues 777 to 786 (TAALGFPEAL) are lumenal. Residues 787–807 (IPVQLLWVNLVTDGLPATALG) traverse the membrane as a helical segment. Positions 787-807 (IPVQLLWVNLVTDGLPATALG) are interaction with PLN. Residues 788 to 1042 (PVQLLWVNLV…DTNFSDMFWS (255 aa)) form an interaction with TMEM64 and PDIA3 region. Residues Asn-795, Thr-798, and Asp-799 each contribute to the Ca(2+) site. Residues 808-827 (FNPPDLDIMNKPPRNPKEPL) lie on the Cytoplasmic side of the membrane. A helical membrane pass occupies residues 828-850 (ISGWLFFRYLAIGCYVGAATVGA). Over 851 to 896 (AAWWFIAADGGPRVTFYQLSHFLQCKEDNPDFEGVDCAVFESPYPM) the chain is Lumenal. Cysteines 875 and 887 form a disulfide. The chain crosses the membrane as a helical span at residues 897–916 (TMALSVLVTIEMCNALNSLS). Glu-907 is a Ca(2+) binding site. The Cytoplasmic portion of the chain corresponds to 917-929 (ENQSLLRMPPWEN). Residues 930-948 (IWLVGSICLSMSLHFLILY) form a helical membrane-spanning segment. The interaction with PLN stretch occupies residues 931-942 (WLVGSICLSMSL). The Lumenal segment spans residues 949–963 (VEPLPLIFQITPLNL). A helical transmembrane segment spans residues 964 to 984 (TQWLMVLKISLPVILMDETLK). Residues 985-1042 (FVARNYLEPGKECVQPATKSCSFSACTDGISWPFVLLIMPLVIWVYSTDTNFSDMFWS) are Cytoplasmic-facing.

It belongs to the cation transport ATPase (P-type) (TC 3.A.3) family. Type IIA subfamily. Interacts with sarcolipin (SLN); the interaction inhibits ATP2A2 Ca(2+) affinity. Interacts with phospholamban (PLN); the interaction inhibits ATP2A2 Ca(2+) affinity. Interacts with myoregulin (MRLN). Interacts with ARLN and ERLN; the interactions inhibit ATP2A2 Ca(2+) affinity. Interacts with STRIT1/DWORF; the interaction results in activation of ATP2A2. Interacts with the monomeric forms of SLN, PLN, ARLN, ERLN and STRI1/DWORF. Interacts with HAX1. Interacts with S100A8 and S100A9. Interacts with SLC35G1 and STIM1. Interacts with TMEM203. Interacts with TMEM64 and PDIA3. Interacts with TMX1. Interacts with TMX2. Interacts with VMP1; VMP1 competes with PLN and SLN to prevent them from forming an inhibitory complex with ATP2A2. Interacts with ULK1. Interacts with S100A1 in a Ca(2+)-dependent manner. Interacts with TUNAR. Interacts with FLVCR2; this interaction occurs in the absence of heme and promotes ATP2A2 proteasomal degradation; this complex is dissociated upon heme binding. Interacts with FNIP1. As to quaternary structure, interacts with TRAM2 (via C-terminus). Requires Mg(2+) as cofactor. In terms of processing, nitrated under oxidative stress. Nitration on the two tyrosine residues inhibits catalytic activity. Serotonylated on Gln residues by TGM2 in response to hypoxia, leading to its inactivation. As to expression, detected in heart left ventricle (at protein level). Isoform 2 is highly expressed in heart and slow twitch skeletal muscle. Isoform 1 is widely expressed.

It is found in the endoplasmic reticulum membrane. Its subcellular location is the sarcoplasmic reticulum membrane. The catalysed reaction is Ca(2+)(in) + ATP + H2O = Ca(2+)(out) + ADP + phosphate + H(+). With respect to regulation, has different conformational states with differential Ca2+ affinity. The E1 conformational state (active form) shows high Ca(2+) affinity, while the E2 state exhibits low Ca(2+) affinity. Binding of ATP allosterically increases its affinity for subsequent binding of Ca2+. Reversibly inhibited by phospholamban (PLN) at low calcium concentrations. PLN inhibits ATP2A2 Ca(2+) affinity by disrupting its allosteric activation by ATP. Inhibited by sarcolipin (SLN) and myoregulin (MRLN). The inhibition is blocked by VMP1. Enhanced by STRIT1/DWORF; STRIT1 increases activity by displacing sarcolipin (SLN), phospholamban (PLN) and myoregulin (MRLN). Stabilizes SERCA2 in its E2 state. Its function is as follows. This magnesium-dependent enzyme catalyzes the hydrolysis of ATP coupled with the translocation of calcium from the cytosol to the sarcoplasmic reticulum lumen. Involved in autophagy in response to starvation. Upon interaction with VMP1 and activation, controls ER-isolation membrane contacts for autophagosome formation. Also modulates ER contacts with lipid droplets, mitochondria and endosomes. In coordination with FLVCR2 mediates heme-stimulated switching from mitochondrial ATP synthesis to thermogenesis. Functionally, involved in the regulation of the contraction/relaxation cycle. Acts as a regulator of TNFSF11-mediated Ca(2+) signaling pathways via its interaction with TMEM64 which is critical for the TNFSF11-induced CREB1 activation and mitochondrial ROS generation necessary for proper osteoclast generation. Association between TMEM64 and SERCA2 in the ER leads to cytosolic Ca(2+) spiking for activation of NFATC1 and production of mitochondrial ROS, thereby triggering Ca(2+) signaling cascades that promote osteoclast differentiation and activation. This is Sarcoplasmic/endoplasmic reticulum calcium ATPase 2 (ATP2A2) from Sus scrofa (Pig).